Consider the following 190-residue polypeptide: Peptidyl-prolyl cis-trans isomerase FKBP20-1 (190 aa).

Glycine 2 bears the N-acetylglycine mark. Residues leucine 32–arginine 121 enclose the PPIase FKBP-type domain. Positions alanine 149–lysine 163 are enriched in basic and acidic residues. The tract at residues alanine 149 to lysine 190 is disordered. Positions glycine 179–lysine 190 are enriched in basic residues.

This sequence belongs to the FKBP-type PPIase family.

It carries out the reaction [protein]-peptidylproline (omega=180) = [protein]-peptidylproline (omega=0). In terms of biological role, PPIases accelerate the folding of proteins. It catalyzes the cis-trans isomerization of proline imidic peptide bonds in oligopeptides. The polypeptide is Peptidyl-prolyl cis-trans isomerase FKBP20-1 (FKBP20-1) (Arabidopsis thaliana (Mouse-ear cress)).